The sequence spans 557 residues: Urocanate hydratase (557 aa).

The tract at residues 1–20 (MSNPRHNEREVRSPRGDELN) is disordered. Residues 52–53 (GG), Q130, 176–178 (GMG), E196, R201, 242–243 (NA), 263–267 (QTSAH), 273–274 (YL), and Y322 contribute to the NAD(+) site. C410 is an active-site residue. Residue G492 participates in NAD(+) binding.

Belongs to the urocanase family. NAD(+) is required as a cofactor.

Its subcellular location is the cytoplasm. It catalyses the reaction 4-imidazolone-5-propanoate = trans-urocanate + H2O. Its pathway is amino-acid degradation; L-histidine degradation into L-glutamate; N-formimidoyl-L-glutamate from L-histidine: step 2/3. Functionally, catalyzes the conversion of urocanate to 4-imidazolone-5-propionate. The chain is Urocanate hydratase from Brucella suis (strain ATCC 23445 / NCTC 10510).